Reading from the N-terminus, the 1097-residue chain is DNA-directed RNA polymerase subunit beta (1097 aa).

Residues aspartate 1073 to aspartate 1097 form a disordered region.

The protein belongs to the RNA polymerase beta chain family. In terms of assembly, in cyanobacteria the RNAP catalytic core is composed of 2 alpha, 1 beta, 1 beta', 1 gamma and 1 omega subunit. When a sigma factor is associated with the core the holoenzyme is formed, which can initiate transcription.

It carries out the reaction RNA(n) + a ribonucleoside 5'-triphosphate = RNA(n+1) + diphosphate. Its function is as follows. DNA-dependent RNA polymerase catalyzes the transcription of DNA into RNA using the four ribonucleoside triphosphates as substrates. The chain is DNA-directed RNA polymerase subunit beta from Synechococcus sp. (strain CC9311).